A 508-amino-acid chain; its full sequence is MGFAKKEHEFLSAIGLAPENPGGFINGKWKASGPVISTVSPSNNQEIAKVTEVSMEEYEEGLRSCNDAAKTWKSLPAPKRGEIVRQIGDALREKLQHLGKLVSLEMGKILAEGIGEVQEVIYMCDFAVGLSRQLNGSIIPSERPDHMMFEVWNPLGIVGVITAFNFPCAVLGWNACIALVCGNCVVWKGAPTTPLVTIAVTKLIAEVLEKNNLPAAIFTAFCGGAEIGEAIAKDTRIPLVSFTGSSKVGAKVQQIVTERFGKCLLELSGNNALIVMDDADVGLAVRSIFFAAVGTAGQRCTTCRRLYLHESIYQNVLDKLVGLYNQVKIGDPLEEGTLVGPVHTKASRENFEKGISTIKSQGGKILTGGSVIESDGNFVQPTIVEIASNASVVKEELFGPVLYVMKFKTLEEAIALNNSVPQGLSSSIFTSKPNTIFKWIGPHGSDCGIVNVNIPTNGAEIGGAFGGEKATGGGREAGSDSWKQYMRRSTCTINYGTELPLAQGINFG.

244 to 249 contacts NAD(+); it reads GSSKVG. Glu266 functions as the Proton acceptor in the catalytic mechanism. The active-site Nucleophile is the Cys300.

This sequence belongs to the aldehyde dehydrogenase family. In terms of assembly, homotetramer.

The catalysed reaction is an aldehyde + NAD(+) + H2O = a carboxylate + NADH + 2 H(+). Its function is as follows. May play a role in fruit development. The chain is Aldehyde dehydrogenase family 7 member A1 from Malus domestica (Apple).